A 459-amino-acid chain; its full sequence is MLKIYNSITRQKQEFKPITPGKIGMYVCGVTIYDLCHIGHGRTFVSFDMIVRYLRYAGYEVNFQRNITDVDDKIIKRANENNESCEALTERLIGEMHQDFDALNMLRPDFEPRATLHIAEIIDMVELLLARGHAYVASDGDVLFSVASYPDYGRLSGQNLDQLQAGARVEVDETKQNPMDFVLWKMSKPGEPTWESPWGPGRPGWHIECSAMNSKHLGLHFDIHGGGSDLQFPHHENEIAQSCCAHDTPYVNYWMHTGMVMVDREKMSKSLGNFFTIRDVLGHYDAETVRYFLLSGHYRSQLNYSEDNLKQARSALERLYTAIKDVDLTVAAAPAEEFVAKFKAAMDDDFNTPEAYSVLFDMVREINRLKLTDMAQASALAVTLKQLADVLGLLSQEPEAFFQGGGSDDEVAEIEALIVERNRARTEKDWAAADVARNRLNELGVELEDSPSGTTWRKK.

A Zn(2+)-binding site is contributed by Cys28. The 'HIGH' region signature appears at 30 to 40 (VTIYDLCHIGH). Residues Cys209, His234, and Glu238 each contribute to the Zn(2+) site. The short motif at 266–270 (KMSKS) is the 'KMSKS' region element. Lys269 lines the ATP pocket.

This sequence belongs to the class-I aminoacyl-tRNA synthetase family. Monomer. Zn(2+) serves as cofactor.

The protein resides in the cytoplasm. It catalyses the reaction tRNA(Cys) + L-cysteine + ATP = L-cysteinyl-tRNA(Cys) + AMP + diphosphate. The chain is Cysteine--tRNA ligase from Shewanella baltica (strain OS223).